Consider the following 363-residue polypeptide: NADH-quinone oxidoreductase subunit H (363 aa).

10 consecutive transmembrane segments (helical) span residues 29–49 (VLKILLIAVPVIVSVAFYVVW), 62–82 (GPMYVGMGIFQAFADVFKLLF), 96–116 (FIIAPLLTLAPAFAAWSVVPF), 127–147 (VGLLYLLAMTSLGVYGIILAG), 163–183 (AAQVVSYEIAMGFALVGVMIA), 202–222 (FFDWFLIPLFPLFIVYWVSGV), 238–257 (EIVAGHMVEYSGGAFALFFL), 278–298 (WLSPIQGWVNADISPWIDWLW), 299–319 (KGGWPWLLMKVFFFASAYIWF), and 339–359 (FIPLTIVWIAVTALMVFYGVI).

The protein belongs to the complex I subunit 1 family. NDH-1 is composed of 14 different subunits. Subunits NuoA, H, J, K, L, M, N constitute the membrane sector of the complex.

It is found in the cell inner membrane. It catalyses the reaction a quinone + NADH + 5 H(+)(in) = a quinol + NAD(+) + 4 H(+)(out). Functionally, NDH-1 shuttles electrons from NADH, via FMN and iron-sulfur (Fe-S) centers, to quinones in the respiratory chain. The immediate electron acceptor for the enzyme in this species is believed to be ubiquinone. Couples the redox reaction to proton translocation (for every two electrons transferred, four hydrogen ions are translocated across the cytoplasmic membrane), and thus conserves the redox energy in a proton gradient. This subunit may bind ubiquinone. This is NADH-quinone oxidoreductase subunit H from Xanthomonas oryzae pv. oryzae (strain MAFF 311018).